Consider the following 317-residue polypeptide: uncharacterized protein (317 aa).

This is an uncharacterized protein from Schizosaccharomyces pombe (strain 972 / ATCC 24843) (Fission yeast).